The following is a 180-amino-acid chain: Stathmin-3 (180 aa).

Residues 38 to 180 (GDMEVKQLDK…NKEQREEISG (143 aa)) form the SLD domain. Low complexity predominate over residues 60-74 (SPSDLSPESPILSSP). The disordered stretch occupies residues 60–82 (SPSDLSPESPILSSPPKKKDLSL). Residues 75–179 (PKKKDLSLEE…RNKEQREEIS (105 aa)) adopt a coiled-coil conformation.

Belongs to the stathmin family.

This is Stathmin-3 (STMN3) from Gallus gallus (Chicken).